The primary structure comprises 164 residues: Cytochrome c-type biogenesis protein CcmE (164 aa).

The Cytoplasmic segment spans residues 1-8; that stretch reads MNPRRKSR. A helical; Signal-anchor for type II membrane protein membrane pass occupies residues 9–29; that stretch reads LYLAVVVLIGIGLTTTLVLYA. At 30–164 the chain is on the periplasmic side; sequence LRSNIDLFYT…NSTAAQGNAS (135 aa). His130 and Tyr134 together coordinate heme. Residues 131 to 150 are compositionally biased toward basic and acidic residues; the sequence is DEKYTPPEVKEAMKENHTRP. The disordered stretch occupies residues 131–164; the sequence is DEKYTPPEVKEAMKENHTRPAEAYNSTAAQGNAS. Residues 154–164 show a composition bias toward polar residues; it reads YNSTAAQGNAS.

Belongs to the CcmE/CycJ family.

The protein resides in the cell inner membrane. In terms of biological role, heme chaperone required for the biogenesis of c-type cytochromes. Transiently binds heme delivered by CcmC and transfers the heme to apo-cytochromes in a process facilitated by CcmF and CcmH. The sequence is that of Cytochrome c-type biogenesis protein CcmE from Yersinia enterocolitica serotype O:8 / biotype 1B (strain NCTC 13174 / 8081).